Reading from the N-terminus, the 833-residue chain is Histone deacetylase HDA1 (833 aa).

A compositionally biased stretch (basic and acidic residues) spans 1-13; the sequence is MSTGQEEHLDSKL. Disordered stretches follow at residues 1–40 and 760–791; these read MSTGQEEHLDSKLENQISEEENQSQNQNFPTAIEDSIQAS and NGNGNGNNGNSSNGGGNKSADSNGHDDFSKRP. Residues 5 to 52 adopt a coiled-coil conformation; that stretch reads QEEHLDSKLENQISEEENQSQNQNFPTAIEDSIQASIEKLDEVDDEIN. Positions 760 to 776 are enriched in gly residues; it reads NGNGNGNNGNSSNGGGN.

This sequence belongs to the histone deacetylase family. HD type 2 subfamily. Interacts with BRG1.

It is found in the nucleus. It catalyses the reaction N(6)-acetyl-L-lysyl-[histone] + H2O = L-lysyl-[histone] + acetate. Its function is as follows. Responsible for the deacetylation of lysine residues on the N-terminal part of the core histones (H2A, H2B, H3 and H4). Histone deacetylation gives a tag for epigenetic repression and plays an important role in transcriptional regulation, cell cycle progression and developmental events. Histone deacetylases act via the formation of large multiprotein complexes. Deacetylates the YNG2 subunit of NuA4 histone acetyltransferase (HAT) module, leading to the reduction of YNG2 and NuA4 HAT at the promoters of hypha-specific genes. Plays a key role in the regulation of filamentous growth and virulence. Involved in the switch between two heritable states, the white and opaque states. These two cell types differ in many characteristics, including cell structure, mating competence, and virulence. Each state is heritable for many generations, and switching between states occurs stochastically at low frequency. The sequence is that of Histone deacetylase HDA1 (HDA1) from Candida albicans (strain SC5314 / ATCC MYA-2876) (Yeast).